Here is a 299-residue protein sequence, read N- to C-terminus: DNA-binding transcriptional activator HetR (299 aa).

S152 is a catalytic residue.

It belongs to the peptidase S48 family. In terms of assembly, homodimer; disulfide-linked.

In terms of biological role, might be involved in temporal and/or spatial regulation of nitrogen fixation. Dimerization is required for DNA-binding. Has both a protease and a DNA-binding activity. The chain is DNA-binding transcriptional activator HetR from Leptolyngbya boryana (Plectonema boryanum).